The sequence spans 617 residues: Formin-binding protein 1 (617 aa).

A required for self-association and induction of membrane tubulation region spans residues 1-79 (MSWGTELWDQ…CKAFISNLNE (79 aa)). One can recognise an F-BAR domain in the interval 1 to 264 (MSWGTELWDQ…AAESIDQKND (264 aa)). Residues 1–335 (MSWGTELWDQ…KKNKLMSLLT (335 aa)) form an interaction with microtubules region. N6-acetyllysine occurs at positions 66 and 110. Residues 67–259 (YTSCKAFISN…DGIVKAAESI (193 aa)) adopt a coiled-coil conformation. Residues 251 to 617 (GIVKAAESID…VCLDKNAKDS (367 aa)) are required for self-association and induction of membrane tubulation. Disordered stretches follow at residues 280-315 (GDIEFEDYTQPMKRTVSDNSLSNSRGEGKPDLKFGG) and 333-366 (LLTSPHQPPPPPPASASPSAVPNGPQSPKQQKEP). Residues S296 and S299 each carry the phosphoserine modification. The segment covering 338-347 (HQPPPPPPAS) has biased composition (pro residues). Phosphoserine occurs at positions 349 and 359. A coiled-coil region spans residues 398–490 (TPEDFSNLPP…EVEGRLPARS (93 aa)). Residues 400–552 (EDFSNLPPEQ…FDDEEPLPAI (153 aa)) are interaction with RND2. In terms of domain architecture, REM-1 spans 404–481 (NLPPEQRRKK…TQKFEAWLAE (78 aa)). The segment at 486-531 (LPARSEQARRQSGLYDSQNPPTVNNCAQDRESPDGSYTEEQSQESE) is disordered. Positions 495 to 617 (RQSGLYDSQN…VCLDKNAKDS (123 aa)) are interaction with PDE6G. Position 497 is a phosphoserine (S497). Positions 499 to 512 (LYDSQNPPTVNNCA) are enriched in polar residues. Phosphotyrosine is present on Y500. Residues 514 to 617 (DRESPDGSYT…VCLDKNAKDS (104 aa)) form a required for interaction with TNKS region. Residue S521 is modified to Phosphoserine. Residues 535-617 (LATDFDDEFD…VCLDKNAKDS (83 aa)) are interaction with DNM1 and DNM3. Residues 550–611 (PAIGTCKALY…PTSYVEVCLD (62 aa)) form the SH3 domain. The segment at 550 to 617 (PAIGTCKALY…VCLDKNAKDS (68 aa)) is interaction with ARHGAP17, DAAM1, DIAPH1 and DIAPH2. The interval 553–609 (GTCKALYTFEGQNEGTISVVEGETLYVIEEDKGDGWTRIRRNEDEEGYVPTSYVEVC) is interaction with DNM2 and WASL. Residues 553–610 (GTCKALYTFEGQNEGTISVVEGETLYVIEEDKGDGWTRIRRNEDEEGYVPTSYVEVCL) are interaction with FASLG.

It belongs to the FNBP1 family. In terms of assembly, interacts specifically with GTP-bound RND2 and CDC42. Interacts with PDE6G and microtubules. Homodimerizes, the dimers can polymerize end-to-end to form filamentous structures. Interacts with AKAP9, ARHGAP17, DAAM1, DIAPH1, DIAPH2, DNM1, DNM2, DNM3, FASLG/FASL, SNX2 and WASL/N-WASP. May interact with TNKS. As to expression, very highly expressed in the epithelial cells of the gastrointestinal tract, respiratory, reproductive and urinary systems. Also highly expressed in brown adipose tissue, cardiomyocytes, enteric ganglia and glucagon producing cells of the pancreas. Expressed in germ cells of the testis and all regions of the brain.

It is found in the cytoplasm. The protein localises to the cytoskeleton. It localises to the cell cortex. Its subcellular location is the lysosome. The protein resides in the cytoplasmic vesicle. It is found in the cell membrane. The protein localises to the membrane. It localises to the clathrin-coated pit. Functionally, may act as a link between RND2 signaling and regulation of the actin cytoskeleton. Required to coordinate membrane tubulation with reorganization of the actin cytoskeleton during the late stage of clathrin-mediated endocytosis. Binds to lipids such as phosphatidylinositol 4,5-bisphosphate and phosphatidylserine and promotes membrane invagination and the formation of tubules. Also enhances actin polymerization via the recruitment of WASL/N-WASP, which in turn activates the Arp2/3 complex. Actin polymerization may promote the fission of membrane tubules to form endocytic vesicles. May be required for the lysosomal retention of FASLG/FASL. This is Formin-binding protein 1 (FNBP1) from Homo sapiens (Human).